The chain runs to 66 residues: Large ribosomal subunit protein bL35 (66 aa).

The protein belongs to the bacterial ribosomal protein bL35 family.

The polypeptide is Large ribosomal subunit protein bL35 (Parvibaculum lavamentivorans (strain DS-1 / DSM 13023 / NCIMB 13966)).